A 391-amino-acid polypeptide reads, in one-letter code: MNYKTVDVILERALLGDDISPQEGIVLLTQTDSGAIASIRHTADKLRQQQAGDTVTYVINRNINFTNICEQHCSFCAFRRNDGDADAYWLDWAGILEKSHDAVQRGATEICMQGGLHPQAQIDGKSLPYYLKLLETIKQEYPQIHLHAFSPQEVQFIARMDGLEYAGVISALQNAGVNSLPGTAAEVLDDQVRRVLCPEKINTATWLEIISTAHKLGLHTTSTILSGHIETPEQQIGHLEKLRSLQQIATNQKYPARITEFIVLPFVGQEAPKSLRRRVGRDQPVLADALLLGAVARIYLGNWIANHQPSWVKLGLAGATEALNWGCNDIGGTLMEEHITTMAGAVGGTCMEVETLQNAIASIGRPYQQRDTLYQPVESAKQLANTVIGNG.

The Radical SAM core domain maps to 55–302; the sequence is VTYVINRNIN…GAVARIYLGN (248 aa). [4Fe-4S] cluster is bound by residues C69, C73, and C76.

It belongs to the radical SAM superfamily. CofH family. In terms of assembly, consists of two subunits, CofG and CofH. It depends on [4Fe-4S] cluster as a cofactor.

It carries out the reaction 5-amino-6-(D-ribitylamino)uracil + L-tyrosine + S-adenosyl-L-methionine = 5-amino-5-(4-hydroxybenzyl)-6-(D-ribitylimino)-5,6-dihydrouracil + 2-iminoacetate + 5'-deoxyadenosine + L-methionine + H(+). It participates in cofactor biosynthesis; coenzyme F0 biosynthesis. Functionally, catalyzes the radical-mediated synthesis of 5-amino-5-(4-hydroxybenzyl)-6-(D-ribitylimino)-5,6-dihydrouracil from 5-amino-6-(D-ribitylamino)uracil and L-tyrosine. The polypeptide is 5-amino-6-(D-ribitylamino)uracil--L-tyrosine 4-hydroxyphenyl transferase (Trichormus variabilis (strain ATCC 29413 / PCC 7937) (Anabaena variabilis)).